We begin with the raw amino-acid sequence, 525 residues long: tRNA(Ile)-lysidine synthase (525 aa).

ATP is bound at residue Ser32–Ser37.

This sequence belongs to the tRNA(Ile)-lysidine synthase family.

The protein resides in the cytoplasm. It catalyses the reaction cytidine(34) in tRNA(Ile2) + L-lysine + ATP = lysidine(34) in tRNA(Ile2) + AMP + diphosphate + H(+). In terms of biological role, ligates lysine onto the cytidine present at position 34 of the AUA codon-specific tRNA(Ile) that contains the anticodon CAU, in an ATP-dependent manner. Cytidine is converted to lysidine, thus changing the amino acid specificity of the tRNA from methionine to isoleucine. The protein is tRNA(Ile)-lysidine synthase of Psychrobacter sp. (strain PRwf-1).